The sequence spans 95 residues: Aspartyl/glutamyl-tRNA(Asn/Gln) amidotransferase subunit C (95 aa).

The protein belongs to the GatC family. As to quaternary structure, heterotrimer of A, B and C subunits.

It carries out the reaction L-glutamyl-tRNA(Gln) + L-glutamine + ATP + H2O = L-glutaminyl-tRNA(Gln) + L-glutamate + ADP + phosphate + H(+). It catalyses the reaction L-aspartyl-tRNA(Asn) + L-glutamine + ATP + H2O = L-asparaginyl-tRNA(Asn) + L-glutamate + ADP + phosphate + 2 H(+). Allows the formation of correctly charged Asn-tRNA(Asn) or Gln-tRNA(Gln) through the transamidation of misacylated Asp-tRNA(Asn) or Glu-tRNA(Gln) in organisms which lack either or both of asparaginyl-tRNA or glutaminyl-tRNA synthetases. The reaction takes place in the presence of glutamine and ATP through an activated phospho-Asp-tRNA(Asn) or phospho-Glu-tRNA(Gln). This chain is Aspartyl/glutamyl-tRNA(Asn/Gln) amidotransferase subunit C, found in Azoarcus sp. (strain BH72).